The sequence spans 140 residues: MKILGFTFPDDLLYEPEKHVWVRIEDNSVVSIGVTDLGQYMAGKIFQVTAKQKGEKVNGRSVLFSIESAKWIGKFRLPIEGEVFDVNEEVVKNPSIINERPYDSWIVKIRVEDMDIIKRTFKPIQEVYKQFEEEAKRVVR.

Positions 29 to 110 constitute a Lipoyl-binding domain; the sequence is VVSIGVTDLG…PYDSWIVKIR (82 aa). An N6-lipoyllysine modification is found at Lys-70.

It belongs to the GcvH family. The glycine cleavage system is composed of four proteins: P, T, L and H. Requires (R)-lipoate as cofactor.

In terms of biological role, the glycine cleavage system catalyzes the degradation of glycine. The H protein shuttles the methylamine group of glycine from the P protein to the T protein. This chain is Probable glycine cleavage system H protein 3, found in Saccharolobus solfataricus (strain ATCC 35092 / DSM 1617 / JCM 11322 / P2) (Sulfolobus solfataricus).